A 170-amino-acid chain; its full sequence is Photosystem I assembly protein Ycf3 (170 aa).

TPR repeat units lie at residues 35 to 68, 72 to 105, and 120 to 153; these read AFTY…EIDP, SYIL…NPFL, and GEQA…TPGN.

It belongs to the Ycf3 family.

The protein resides in the plastid. Its subcellular location is the chloroplast thylakoid membrane. Essential for the assembly of the photosystem I (PSI) complex. May act as a chaperone-like factor to guide the assembly of the PSI subunits. This is Photosystem I assembly protein Ycf3 from Oryza nivara (Indian wild rice).